Consider the following 211-residue polypeptide: LexA repressor (211 aa).

Residues 35–55 (RAEIANFFGFKSANAAEEHLK) constitute a DNA-binding region (H-T-H motif). Residues Ser-128 and Lys-165 each act as for autocatalytic cleavage activity in the active site.

This sequence belongs to the peptidase S24 family. Homodimer.

It catalyses the reaction Hydrolysis of Ala-|-Gly bond in repressor LexA.. In terms of biological role, represses a number of genes involved in the response to DNA damage (SOS response), including recA and lexA. In the presence of single-stranded DNA, RecA interacts with LexA causing an autocatalytic cleavage which disrupts the DNA-binding part of LexA, leading to derepression of the SOS regulon and eventually DNA repair. The sequence is that of LexA repressor from Colwellia psychrerythraea (strain 34H / ATCC BAA-681) (Vibrio psychroerythus).